The sequence spans 250 residues: MGNLRVDVITLFPEMFSAITEYGITSRAVKQGLLQVICWNPRDYTTDRHHTVDDRPFGGGPGMVMKIKPLEDALVSARQATGAAAKVIYLSPQGRKLTQQAVKGLAEQESLILIAGRYEGIDERFIEAHVDEEWSIGDYVLSGGELPAMVLIDAVTRLLPGALGHVDSAEEDSFTDGLLDCPHYTRPEVYADQRVPDVLLSGNHAHIRRWRMKQSLGRTFERRADLLESRSLSGEEKKLLEEYLRERDDS.

Residues Gly-116 and 136–141 (IGDYVL) contribute to the S-adenosyl-L-methionine site.

It belongs to the RNA methyltransferase TrmD family. Homodimer.

The protein localises to the cytoplasm. The enzyme catalyses guanosine(37) in tRNA + S-adenosyl-L-methionine = N(1)-methylguanosine(37) in tRNA + S-adenosyl-L-homocysteine + H(+). Functionally, specifically methylates guanosine-37 in various tRNAs. This is tRNA (guanine-N(1)-)-methyltransferase from Pseudomonas putida (strain ATCC 700007 / DSM 6899 / JCM 31910 / BCRC 17059 / LMG 24140 / F1).